The sequence spans 334 residues: Tryptophan--tRNA ligase (334 aa).

Residues 11–13 (QPS) and 19–20 (GN) each bind ATP. Residues 12–20 (PSGELTIGN) carry the 'HIGH' region motif. Asp-135 contributes to the L-tryptophan binding site. ATP is bound by residues 147 to 149 (GED), Val-186, and 195 to 199 (KMSKS). A 'KMSKS' region motif is present at residues 195–199 (KMSKS).

It belongs to the class-I aminoacyl-tRNA synthetase family. In terms of assembly, homodimer.

Its subcellular location is the cytoplasm. It carries out the reaction tRNA(Trp) + L-tryptophan + ATP = L-tryptophyl-tRNA(Trp) + AMP + diphosphate + H(+). In terms of biological role, catalyzes the attachment of tryptophan to tRNA(Trp). In Salmonella typhi, this protein is Tryptophan--tRNA ligase.